The primary structure comprises 752 residues: MAP/microtubule affinity-regulating kinase 4 (752 aa).

The segment at 1–36 (MSSRTALAPGNDRNSDTHGTLGSGRSSDKGPSWSSR) is disordered. One can recognise a Protein kinase domain in the interval 59-310 (YRLLRTIGKG…LEQIMKDKWI (252 aa)). ATP is bound by residues 65-73 (IGKGNFAKV) and K88. D181 (proton acceptor) is an active-site residue. A Phosphothreonine; by LKB1 modification is found at T214. The 45-residue stretch at 324 to 368 (EPEEDFGDTKRIEVMVGMGYTREEIKEALTNQKYNEVTATYLLLG) folds into the UBA domain. Residues 385–615 (ARVRAPSDTT…SGRPRPTTNL (231 aa)) form a disordered region. Over residues 391-406 (SDTTNGTSSSKGSSHN) the composition is skewed to low complexity. Residues S423 and S543 each carry the phosphoserine modification. Over residues 544 to 553 (PSSHSLAPPS) the composition is skewed to low complexity. A KA1 domain is found at 703–752 (AGGPEPLSHFEVEVCQLPRPGLRGVLFRRVAGTALAFRTLVTRISNDLEL).

The protein belongs to the protein kinase superfamily. CAMK Ser/Thr protein kinase family. SNF1 subfamily. In terms of assembly, interacts with MAPT/TAU. Interacts with gamma-tubulin. Interacts with ODF2. Interacts with USP9X. Interacts with YWHAQ. Interacts with NLRP3; promoting NLRP3 recruitment to microtubule organizing center (MTOC). Requires Mg(2+) as cofactor. Post-translationally, ubiquitinated with 'Lys-29'- and 'Lys-33'-linked polyubiquitins which appear to impede LKB1-mediated phosphorylation. Deubiquitinated by USP9X. In terms of processing, phosphorylated at Thr-214 by STK11/LKB1 in complex with STE20-related adapter-alpha (STRADA) pseudo kinase and CAB39. Phosphorylated throughout the cell cycle. Isoform 1 and isoform 2 show similar expression patterns in the central nervous system and are present in the same subsets of neurons including pyramidal and non-pyramidal neurons in the cerebral cortex and hippocampus, cerebellar Purkinje cells, and interneurons and motor neurons in the spinal cord but not in glial cells (at protein level). Isoform 2 is the major isoform in brain and cerebellum. Also expressed in spleen, liver, small intestine, colon, kidney, tongue, testis and lung. Isoform 1 and isoform 2 are expressed at similar levels in heart.

Its subcellular location is the cytoplasm. It localises to the cytoskeleton. It is found in the microtubule organizing center. The protein resides in the centrosome. The protein localises to the cilium axoneme. Its subcellular location is the cilium basal body. It localises to the cell projection. It is found in the dendrite. It catalyses the reaction L-seryl-[protein] + ATP = O-phospho-L-seryl-[protein] + ADP + H(+). The catalysed reaction is L-threonyl-[protein] + ATP = O-phospho-L-threonyl-[protein] + ADP + H(+). Activated by phosphorylation on Thr-214. In terms of biological role, serine/threonine-protein kinase. Phosphorylates the microtubule-associated protein MAPT/TAU. Also phosphorylates the microtubule-associated proteins MAP2 and MAP4. Involved in regulation of the microtubule network, causing reorganization of microtubules into bundles. Required for the initiation of axoneme extension during cilium assembly. Regulates the centrosomal location of ODF2 and phosphorylates ODF2 in vitro. Plays a role in cell cycle progression, specifically in the G1/S checkpoint. Reduces neuronal cell survival. Plays a role in energy homeostasis by regulating satiety and metabolic rate. Promotes adipogenesis by activating JNK1 and inhibiting the p38MAPK pathway, and triggers apoptosis by activating the JNK1 pathway. Phosphorylates mTORC1 complex member RPTOR and acts as a negative regulator of the mTORC1 complex, probably due to disruption of the interaction between phosphorylated RPTOR and the RRAGA/RRAGC heterodimer which is required for mTORC1 activation. Involved in NLRP3 positioning along microtubules by mediating NLRP3 recruitment to microtubule organizing center (MTOC) upon inflammasome activation. This chain is MAP/microtubule affinity-regulating kinase 4, found in Mus musculus (Mouse).